A 270-amino-acid chain; its full sequence is Endochitinase PR4 (270 aa).

The first 23 residues, 1–23 (MGNKLVLVLVAVALVMGPKNVSA), serve as a signal peptide directing secretion. In terms of domain architecture, Chitin-binding type-1 spans 24-58 (QNCGCAEGLCCSQYGYCGTGEDYCGTGCQQGPCTT). 7 disulfide bridges follow: cysteine 26-cysteine 34, cysteine 28-cysteine 40, cysteine 33-cysteine 47, cysteine 51-cysteine 56, cysteine 88-cysteine 137, cysteine 150-cysteine 160, and cysteine 238-cysteine 270. Glutamate 132 serves as the catalytic Proton donor.

This sequence belongs to the glycosyl hydrolase 19 family. Chitinase class I subfamily.

The catalysed reaction is Random endo-hydrolysis of N-acetyl-beta-D-glucosaminide (1-&gt;4)-beta-linkages in chitin and chitodextrins.. Functionally, defense against chitin-containing fungal pathogens. This Phaseolus vulgaris (Kidney bean) protein is Endochitinase PR4 (CHI4).